The sequence spans 104 residues: Large ribosomal subunit protein uL24 (104 aa).

Belongs to the universal ribosomal protein uL24 family. As to quaternary structure, part of the 50S ribosomal subunit.

Its function is as follows. One of two assembly initiator proteins, it binds directly to the 5'-end of the 23S rRNA, where it nucleates assembly of the 50S subunit. One of the proteins that surrounds the polypeptide exit tunnel on the outside of the subunit. The sequence is that of Large ribosomal subunit protein uL24 from Clostridium botulinum (strain Eklund 17B / Type B).